We begin with the raw amino-acid sequence, 118 residues long: Basic phospholipase A2 CM-II (118 aa).

7 disulfide bridges follow: Cys11–Cys70, Cys26–Cys117, Cys28–Cys44, Cys43–Cys98, Cys50–Cys91, Cys59–Cys84, and Cys77–Cys89. Ca(2+)-binding residues include Tyr27, Gly29, and Gly31. Residue His47 is part of the active site. Asp48 is a binding site for Ca(2+). Asp92 is an active-site residue.

This sequence belongs to the phospholipase A2 family. Group I subfamily. D49 sub-subfamily. It depends on Ca(2+) as a cofactor. In terms of tissue distribution, expressed by the venom gland.

It is found in the secreted. The enzyme catalyses a 1,2-diacyl-sn-glycero-3-phosphocholine + H2O = a 1-acyl-sn-glycero-3-phosphocholine + a fatty acid + H(+). Functionally, snake venom phospholipase A2 (PLA2) that causes myonecrosis when injected intramuscularly, causes neuromuscular blockade with a gradual contracture and a decreased sensitivity to ACh and KCl (in the chick biventer cervicis nerve-muscle preparation), abolishes twitches evoked by indirect stimulation earlier than those by direct stimulation (in the mouse phrenic nerve-diaphragm preparation), shows indirect hemolytic activity, and shows weak anticoagulant activity. PLA2 catalyzes the calcium-dependent hydrolysis of the 2-acyl groups in 3-sn-phosphoglycerides. This Naja mossambica (Mozambique spitting cobra) protein is Basic phospholipase A2 CM-II.